Consider the following 242-residue polypeptide: Phosducin-like protein 2 (242 aa).

Positions 34–201 (VLRLQKEAMV…LEWKLAEVGA (168 aa)) constitute a Phosducin domain. The thioredoxin fold stretch occupies residues 89 to 242 (FGELREISGN…SSNSDSEDTK (154 aa)).

The protein belongs to the phosducin family. Interacts with the CCT chaperonin complex and actin.

The protein resides in the endoplasmic reticulum. Its function is as follows. Essential for male fertility, spermiogenesis and acrosome formation. This chain is Phosducin-like protein 2 (PDCL2), found in Bos taurus (Bovine).